The following is a 314-amino-acid chain: Mitochondrial 2-oxoglutarate/malate carrier protein (314 aa).

At alanine 2 the chain carries N-acetylalanine. Phosphoserine is present on serine 6. Solcar repeat units follow at residues 23–108 (VKFL…LFER), 117–208 (PGFL…SKQF), and 217–306 (DNIL…MNKA). Residues 24–42 (KFLFGGLAGMGATVFVQPL) traverse the membrane as a helical segment. N6-succinyllysine is present on lysine 57. Residues 83–101 (GLSAGLLRQATYTTTRLGI) traverse the membrane as a helical segment. A Phosphotyrosine modification is found at tyrosine 102. Transmembrane regions (helical) follow at residues 119-140 (FLLK…GTPA), 183-202 (GCIP…LASY), and 222-240 (HFCA…SMPV). Residue lysine 256 is modified to N6-acetyllysine. A helical transmembrane segment spans residues 281-300 (GFTPYYARLGPHTVLTFIFL).

This sequence belongs to the mitochondrial carrier (TC 2.A.29) family. As to quaternary structure, interacts with SMIM26. Post-translationally, the N-terminus is blocked. In terms of tissue distribution, heart, liver and brain.

The protein localises to the mitochondrion inner membrane. The enzyme catalyses (S)-malate(in) + 2-oxoglutarate(out) = (S)-malate(out) + 2-oxoglutarate(in). The catalysed reaction is malonate(in) + 2-oxoglutarate(out) = malonate(out) + 2-oxoglutarate(in). It catalyses the reaction succinate(in) + 2-oxoglutarate(out) = succinate(out) + 2-oxoglutarate(in). It carries out the reaction maleate(in) + 2-oxoglutarate(out) = maleate(out) + 2-oxoglutarate(in). The enzyme catalyses oxaloacetate(in) + 2-oxoglutarate(out) = oxaloacetate(out) + 2-oxoglutarate(in). Its function is as follows. Catalyzes the transport of 2-oxoglutarate (alpha-oxoglutarate) across the inner mitochondrial membrane in an electroneutral exchange for malate. Can also exchange 2-oxoglutarate for other dicarboxylic acids such as malonate, succinate, maleate and oxaloacetate, although with lower affinity. Contributes to several metabolic processes, including the malate-aspartate shuttle, the oxoglutarate/isocitrate shuttle, in gluconeogenesis from lactate, and in nitrogen metabolism. Maintains mitochondrial fusion and fission events, and the organization and morphology of cristae. Involved in the regulation of apoptosis. Helps protect from cytotoxic-induced apoptosis by modulating glutathione levels in mitochondria. The protein is Mitochondrial 2-oxoglutarate/malate carrier protein (SLC25A11) of Bos taurus (Bovine).